The sequence spans 682 residues: ATP-dependent zinc metalloprotease FtsH (682 aa).

Residues 1–7 are Cytoplasmic-facing; sequence MKQSHKT. The helical transmembrane segment at 8–28 threads the bilayer; that stretch reads ILLWALLIFLFVMIYNLISDG. Residues 29 to 138 are Periplasmic-facing; the sequence is TSGEETLDTT…YEVKAKEEST (110 aa). Residues 139–159 traverse the membrane as a helical segment; it reads FWQSLLISWLPMLLLFALFFF. Topologically, residues 160–682 are cytoplasmic; the sequence is FMRQLQAGGG…SGTDPEPEPA (523 aa). 232 to 239 is a binding site for ATP; sequence GPPGTGKT. His454 contacts Zn(2+). Glu455 is an active-site residue. Zn(2+)-binding residues include His458 and Asp531. Residues 638–682 form a disordered region; the sequence is LSRPAVVSKPSADAESSVDEDEREARPALFPPLGKSGTDPEPEPA.

This sequence in the central section; belongs to the AAA ATPase family. In the C-terminal section; belongs to the peptidase M41 family. Homohexamer. Requires Zn(2+) as cofactor.

The protein resides in the cell inner membrane. Functionally, acts as a processive, ATP-dependent zinc metallopeptidase for both cytoplasmic and membrane proteins. Plays a role in the quality control of integral membrane proteins. This Haliangium ochraceum (strain DSM 14365 / JCM 11303 / SMP-2) protein is ATP-dependent zinc metalloprotease FtsH.